The primary structure comprises 341 residues: L-threonine 3-dehydrogenase (341 aa).

Position 38 (Cys-38) interacts with Zn(2+). Residues Thr-40 and His-43 each act as charge relay system in the active site. 6 residues coordinate Zn(2+): His-63, Glu-64, Cys-93, Cys-96, Cys-99, and Cys-107. Residues Ile-175, Asp-195, Arg-200, 262–264, and 286–287 each bind NAD(+); these read LGI and IY.

Belongs to the zinc-containing alcohol dehydrogenase family. As to quaternary structure, homotetramer. Requires Zn(2+) as cofactor.

It localises to the cytoplasm. The enzyme catalyses L-threonine + NAD(+) = (2S)-2-amino-3-oxobutanoate + NADH + H(+). The protein operates within amino-acid degradation; L-threonine degradation via oxydo-reductase pathway; glycine from L-threonine: step 1/2. Its function is as follows. Catalyzes the NAD(+)-dependent oxidation of L-threonine to 2-amino-3-ketobutyrate. The polypeptide is L-threonine 3-dehydrogenase (Pseudoalteromonas translucida (strain TAC 125)).